The primary structure comprises 462 residues: Argininosuccinate lyase (462 aa).

This sequence belongs to the lyase 1 family. Argininosuccinate lyase subfamily.

Its subcellular location is the cytoplasm. The enzyme catalyses 2-(N(omega)-L-arginino)succinate = fumarate + L-arginine. It functions in the pathway amino-acid biosynthesis; L-arginine biosynthesis; L-arginine from L-ornithine and carbamoyl phosphate: step 3/3. The chain is Argininosuccinate lyase from Streptococcus agalactiae serotype V (strain ATCC BAA-611 / 2603 V/R).